The chain runs to 330 residues: Fructose-1,6-bisphosphatase class 1 (330 aa).

Residues Glu-78, Asp-97, Leu-99, and Asp-100 each coordinate Mg(2+). Substrate-binding positions include 100-103 (DGSS) and Asn-188. Glu-260 contributes to the Mg(2+) binding site.

It belongs to the FBPase class 1 family. In terms of assembly, homotetramer. It depends on Mg(2+) as a cofactor.

The protein resides in the cytoplasm. It catalyses the reaction beta-D-fructose 1,6-bisphosphate + H2O = beta-D-fructose 6-phosphate + phosphate. The protein operates within carbohydrate biosynthesis; gluconeogenesis. This chain is Fructose-1,6-bisphosphatase class 1, found in Paracoccus denitrificans (strain Pd 1222).